Consider the following 146-residue polypeptide: Snake venom vascular endothelial growth factor toxin (146 aa).

An N-terminal signal peptide occupies residues 1–24 (MAVYLLAVAILFCIQGWPLGTVQG). Pyrrolidone carboxylic acid is present on Gln-25. 3 cysteine pairs are disulfide-bonded: Cys-38–Cys-80, Cys-69–Cys-115, and Cys-73–Cys-117. Residues 118–146 (RPRSASGVNSRKHKRNPEEGEPRAKFPFV) are disordered. Basic and acidic residues predominate over residues 133–146 (NPEEGEPRAKFPFV).

It belongs to the PDGF/VEGF growth factor family. Snake venom VEGF subfamily. Homodimer; disulfide-linked. Interacts with VEGF receptor-1 (FLT1) with a high affinity, whereas it binds to VEGF receptor-2 (KDR) with a low affinity. Does not bind VEGF receptor-3 (FLT4). Expressed by the venom gland.

Its subcellular location is the secreted. Its function is as follows. Snake venom VEGFs that may contribute to venom dispersion and prey subjugation by inducing vascular permeability and hypotension. This protein induces an increase in capillary permeability after intradermal injection, as well as a drastic hypotensive effect after intravenous injection. The hypotension is mediated by nitric oxide (NO), which is produced by VEGF-activated endothelium NO synthase. Also induces angiogenesis in vitro. Like other crotalid VEGFs, this protein interacts with VEGF receptor-1 (FLT1) with a high affinity, whereas it binds to VEGF receptor-2 (KDR) with a low affinity. This is Snake venom vascular endothelial growth factor toxin from Bothrops jararaca (Jararaca).